A 100-amino-acid chain; its full sequence is MHLTPRETEKLMLHYAGELARKRKERGLKLNYPEAVALISAELMEAARDGKTVTELMQYGAKILTRDDVMEGVDAMIHEIQIEATFPDGTKLVTVHNPIR.

It belongs to the urease gamma subunit family. Heterotrimer of UreA (gamma), UreB (beta) and UreC (alpha) subunits. Three heterotrimers associate to form the active enzyme.

It localises to the cytoplasm. The enzyme catalyses urea + 2 H2O + H(+) = hydrogencarbonate + 2 NH4(+). Its pathway is nitrogen metabolism; urea degradation; CO(2) and NH(3) from urea (urease route): step 1/1. This chain is Urease subunit gamma, found in Acetivibrio thermocellus (strain ATCC 27405 / DSM 1237 / JCM 9322 / NBRC 103400 / NCIMB 10682 / NRRL B-4536 / VPI 7372) (Clostridium thermocellum).